Consider the following 273-residue polypeptide: Large ribosomal subunit protein uL2 (273 aa).

Residues 221-262 (RGTAMNPVDHPHGGGEGRNFGKHPVTPWGVQTKGKKTRHNKR) form a disordered region. A compositionally biased stretch (basic residues) spans 253-262 (KGKKTRHNKR).

It belongs to the universal ribosomal protein uL2 family. As to quaternary structure, part of the 50S ribosomal subunit. Forms a bridge to the 30S subunit in the 70S ribosome.

Functionally, one of the primary rRNA binding proteins. Required for association of the 30S and 50S subunits to form the 70S ribosome, for tRNA binding and peptide bond formation. It has been suggested to have peptidyltransferase activity; this is somewhat controversial. Makes several contacts with the 16S rRNA in the 70S ribosome. In Haemophilus influenzae (strain ATCC 51907 / DSM 11121 / KW20 / Rd), this protein is Large ribosomal subunit protein uL2.